A 682-amino-acid chain; its full sequence is Connectin (682 aa).

Residues 1–24 form the signal peptide; the sequence is MATLADSAICFLLLSLLLIGACLV. Positions 29–54 are disordered; sequence GRAKDDRRTRGRGSSSGVLSSSSSSS. The segment covering 40–54 has biased composition (low complexity); it reads RGSSSGVLSSSSSSS. LRR repeat units follow at residues 149 to 172, 173 to 196, 199 to 220, 223 to 244, 247 to 268, 271 to 292, 295 to 316, 319 to 342, 343 to 364, 367 to 388, and 389 to 404; these read LREL…IIEP, LKNL…AFAN, FLER…AFAN, RLRE…AFRN, LCER…LFAD, RLTF…IFRG, NLNV…VFAE, SLSE…DGLN, TLKT…LLRG, ALLS…TFQP, and IMDN…LVSD. An LRRCT domain is found at 405–462; it reads NKFICDCRLQWIFELKNRTRHLQLRDSLEDLHCTLQEPKLSHFVDPVPPTILDVLNIG. Positions 503–536 are disordered; that stretch reads RQALRGQRQFASSAENVVESKMRRRRKRQEEVKE. A lipid anchor (GPI-anchor amidated alanine) is attached at A658. Residues 659–682 constitute a propeptide, removed in mature form; it reads GANSLAQGMTIIVSLVALMMISRG.

As to expression, predominantly expressed in abdominal and thoracic segment muscle and motorneuron cells.

It is found in the cell membrane. In terms of biological role, cell adhesion protein involved in target recognition during neuromuscular development. Mediates homophilic cellular adhesion. This chain is Connectin (Con), found in Drosophila melanogaster (Fruit fly).